Here is a 347-residue protein sequence, read N- to C-terminus: Nuclear distribution protein nudE-like 1 (347 aa).

Residues 28–190 adopt a coiled-coil conformation; sequence QSFQEARDEL…LAVRERQQEV (163 aa). Residues 56 to 166 form a self-association region; it reads VQAEQRNRDL…LDEKESLLVS (111 aa). Residues 64 to 189 are interaction with KATNB1; the sequence is DLQADNQRLK…ELAVRERQQE (126 aa). Residues 114 to 133 form a required for interaction with PAFAH1B1 region; sequence YVRELEQANDDLERAKRATI. The interaction with CENPF stretch occupies residues 175 to 347; sequence RDLRQELAVR…SAPGMLPLSV (173 aa). Residues 189 to 256 form an interaction with YWHAE region; sequence EVTRKSAPSS…SARISALNIV (68 aa). An interaction with NEFL region spans residues 191–347; it reads TRKSAPSSPT…SAPGMLPLSV (157 aa). The tract at residues 195–256 is interaction with KATNA1; the sequence is APSSPTLDCE…SARISALNIV (62 aa). The residue at position 215 (Ser215) is a Phosphoserine. At Thr219 the chain carries Phosphothreonine; by CDK1 and MAPK1. Ser231 is subject to Phosphoserine. The tract at residues 241–280 is interaction with DISC1; it reads TSPLTPSARISALNIVGDLLRKVGALESKLAACRNFAKDQ. Ser242 is subject to Phosphoserine; by CDK1. Position 245 is a phosphothreonine; by CDK1 and MAPK1 (Thr245). Residues 256–291 form a required for localization to the centrosome and interaction with dynein, dynactin, tubulin gamma, PCM1 and PCNT region; it reads VGDLLRKVGALESKLAACRNFAKDQASRKSYISGNV. Cys273 carries S-palmitoyl cysteine; by ZDHHC2, ZDHHC3 and ZDHHC7 lipidation. The tract at residues 314–347 is disordered; the sequence is KGAVNGFDPAPPPPDPGLGSSRPSSAPGMLPLSV. The residue at position 346 (Ser346) is a Phosphoserine.

Belongs to the nudE family. As to quaternary structure, self-associates. Interacts with DISC1, dynein, dynactin, tubulin gamma, KATNA1, KATNB1, microtubules, PAFAH1B1, PCM1, PCNT, and YWHAE. Interacts directly with NEFL and indirectly with NEFH. Interacts (via C-terminus) with CENPF. Interacts with ZNF365. Interacts with PLEKHM1 (via N- and C-terminus). Interacts with GTP-bound RAB9A; the interaction may lead to RAB9A-dynein motor tethering. Phosphorylated in mitosis. Can be phosphorylated by CDK1, CDK5 and MAPK1. Phosphorylation by CDK5 promotes interaction with KATNA1 and YWHAE. Post-translationally, palmitoylation at Cys-273 reduces affinity for dynein.

It localises to the cytoplasm. The protein localises to the cytoskeleton. Its subcellular location is the microtubule organizing center. It is found in the centrosome. The protein resides in the chromosome. It localises to the centromere. The protein localises to the kinetochore. Its subcellular location is the spindle. Functionally, required for organization of the cellular microtubule array and microtubule anchoring at the centrosome. May regulate microtubule organization at least in part by targeting the microtubule severing protein KATNA1 to the centrosome. Also positively regulates the activity of the minus-end directed microtubule motor protein dynein. May enhance dynein-mediated microtubule sliding by targeting dynein to the microtubule plus ends. Required for several dynein- and microtubule-dependent processes such as the maintenance of Golgi integrity, the centripetal motion of secretory vesicles and the coupling of the nucleus and centrosome. Also required during brain development for the migration of newly formed neurons from the ventricular/subventricular zone toward the cortical plate. Required for mitosis in some cell types but appears to be dispensible for mitosis in cortical neuronal progenitors, which instead requires NDE1. Facilitates the polymerization of neurofilaments from the individual subunits NEFH and NEFL. Positively regulates lysosome peripheral distribution and ruffled border formation in osteoclasts. Plays a role, together with DISC1, in the regulation of neurite outgrowth. May act as a RAB9A/B effector that tethers RAB9-associated late endosomes to the dynein motor for their retrograde transport to the trans-Golgi network. The polypeptide is Nuclear distribution protein nudE-like 1 (NDEL1) (Macaca fascicularis (Crab-eating macaque)).